A 1371-amino-acid chain; its full sequence is Pleckstrin homology-like domain family B member 1 (1371 aa).

A Phosphoserine modification is found at serine 51. The FHA domain occupies 64–125; that stretch reads TVIGSAARDI…LTQGCMLCLG (62 aa). Position 131 is an asymmetric dimethylarginine (arginine 131). Residues 153 to 182 are disordered; it reads GPTYNPGSAESESLVNGNHTAQPATRAPSA. Positions 157–175 are enriched in polar residues; it reads NPGSAESESLVNGNHTAQP. A phosphoserine mark is found at serine 192, serine 220, and serine 223. Disordered stretches follow at residues 211–336 and 368–573; these read AAGK…TDSP and PSSG…RVPI. 2 stretches are compositionally biased toward low complexity: residues 252–273 and 296–312; these read SPAF…HSPS and LQPP…SDSP. Residues serine 325 and serine 335 each carry the phosphoserine modification. Polar residues predominate over residues 368–377; sequence PSSGARSQPA. Serine 382, serine 405, serine 431, serine 445, serine 463, serine 472, serine 491, and serine 503 each carry phosphoserine. Residues 464-477 show a composition bias toward low complexity; it reads PSLSRRALSPLPAR. Basic and acidic residues predominate over residues 483–493; that stretch reads KLSREVAESPR. An Omega-N-methylarginine modification is found at arginine 514. Phosphoserine occurs at positions 520 and 522. The residue at position 524 (threonine 524) is a Phosphothreonine. Residues serine 535, serine 541, serine 553, serine 557, serine 565, serine 580, serine 585, and serine 683 each carry the phosphoserine modification. The span at 547 to 559 shows a compositional bias: polar residues; that stretch reads GSLTGASPRQSPR. Disordered stretches follow at residues 672–714 and 942–1020; these read ESGG…GAKH and GLAA…QNGT. Basic and acidic residues-rich tracts occupy residues 682 to 696 and 703 to 714; these read ESME…KEEC and QQEHEDAPGAKH. A coiled-coil region spans residues 688–798; it reads DEENLKEECS…ETGIQKDRDK (111 aa). Serine 976 and serine 1022 each carry phosphoserine. Low complexity predominate over residues 976 to 997; the sequence is SPLPRTRSGPLPSSSGSSSSSS. The segment at 1124–1143 is disordered; the sequence is SMETSISTGGNSACSPDNMS. Positions 1150-1216 form a coiled coil; the sequence is MGKIEEMEKM…QQLVEKEVKL (67 aa). The region spanning 1261-1364 is the PH domain; that stretch reads SKVCRGYLIK…WMDVIVTGAE (104 aa).

In Mus musculus (Mouse), this protein is Pleckstrin homology-like domain family B member 1 (Phldb1).